We begin with the raw amino-acid sequence, 780 residues long: 5-methyltetrahydropteroyltriglutamate--homocysteine methyltransferase (780 aa).

Residues 15–18 (RELK) and Lys-114 each bind 5-methyltetrahydropteroyltri-L-glutamate. L-homocysteine is bound by residues 457–459 (IGS) and Glu-510. Residues 457 to 459 (IGS) and Glu-510 contribute to the L-methionine site. Residues 541–542 (RC) and Trp-587 contribute to the 5-methyltetrahydropteroyltri-L-glutamate site. Asp-625 lines the L-homocysteine pocket. Asp-625 contacts L-methionine. Glu-631 contacts 5-methyltetrahydropteroyltri-L-glutamate. Zn(2+) is bound by residues His-667, Cys-669, and Glu-691. His-720 serves as the catalytic Proton donor. Cys-752 contacts Zn(2+).

It belongs to the vitamin-B12 independent methionine synthase family. Requires Zn(2+) as cofactor.

The catalysed reaction is 5-methyltetrahydropteroyltri-L-glutamate + L-homocysteine = tetrahydropteroyltri-L-glutamate + L-methionine. It participates in amino-acid biosynthesis; L-methionine biosynthesis via de novo pathway; L-methionine from L-homocysteine (MetE route): step 1/1. Functionally, catalyzes the transfer of a methyl group from 5-methyltetrahydrofolate to homocysteine resulting in methionine formation. The polypeptide is 5-methyltetrahydropteroyltriglutamate--homocysteine methyltransferase (Nitratidesulfovibrio vulgaris (strain DSM 19637 / Miyazaki F) (Desulfovibrio vulgaris)).